The following is a 962-amino-acid chain: Glycine dehydrogenase (decarboxylating) (962 aa).

Position 709 is an N6-(pyridoxal phosphate)lysine (Lys-709).

The protein belongs to the GcvP family. As to quaternary structure, the glycine cleavage system is composed of four proteins: P, T, L and H. Pyridoxal 5'-phosphate is required as a cofactor.

The catalysed reaction is N(6)-[(R)-lipoyl]-L-lysyl-[glycine-cleavage complex H protein] + glycine + H(+) = N(6)-[(R)-S(8)-aminomethyldihydrolipoyl]-L-lysyl-[glycine-cleavage complex H protein] + CO2. In terms of biological role, the glycine cleavage system catalyzes the degradation of glycine. The P protein binds the alpha-amino group of glycine through its pyridoxal phosphate cofactor; CO(2) is released and the remaining methylamine moiety is then transferred to the lipoamide cofactor of the H protein. The protein is Glycine dehydrogenase (decarboxylating) of Shewanella sp. (strain ANA-3).